The sequence spans 158 residues: Low molecular weight phosphotyrosine protein phosphatase (158 aa).

An N-acetylalanine modification is found at A2. C13 functions as the Nucleophile in the catalytic mechanism. The active site involves R19. Residue D130 is the Proton donor of the active site. Residues Y132 and Y133 each carry the phosphotyrosine modification.

It belongs to the low molecular weight phosphotyrosine protein phosphatase family. As to quaternary structure, interacts with EPHA2; dephosphorylates EPHA2. Interacts with EPHB1. In terms of assembly, interacts with the SH3 domain of SPTAN1. There is no interaction observed for isoform 2. Post-translationally, phosphorylated by LCK. Phosphorylation at Tyr-132 increases its phosphatase activity. As to expression, widely expressed with highest levels in brain and liver and lowest levels in muscle.

It localises to the cytoplasm. It catalyses the reaction O-phospho-L-tyrosyl-[protein] + H2O = L-tyrosyl-[protein] + phosphate. It carries out the reaction a phosphate monoester + H2O = an alcohol + phosphate. Its activity is regulated as follows. Inhibited by sulfhydryl reagents. Acts on tyrosine phosphorylated proteins, low-MW aryl phosphates and natural and synthetic acyl phosphates with differences in substrate specificity between isoform 1 and isoform 2. The chain is Low molecular weight phosphotyrosine protein phosphatase from Mus musculus (Mouse).